Reading from the N-terminus, the 728-residue chain is 1,4-alpha-glucan branching enzyme GlgB (728 aa).

Asp405 serves as the catalytic Nucleophile. The active-site Proton donor is the Glu458.

It belongs to the glycosyl hydrolase 13 family. GlgB subfamily. In terms of assembly, monomer.

It carries out the reaction Transfers a segment of a (1-&gt;4)-alpha-D-glucan chain to a primary hydroxy group in a similar glucan chain.. The protein operates within glycan biosynthesis; glycogen biosynthesis. In terms of biological role, catalyzes the formation of the alpha-1,6-glucosidic linkages in glycogen by scission of a 1,4-alpha-linked oligosaccharide from growing alpha-1,4-glucan chains and the subsequent attachment of the oligosaccharide to the alpha-1,6 position. This Serratia proteamaculans (strain 568) protein is 1,4-alpha-glucan branching enzyme GlgB.